A 502-amino-acid chain; its full sequence is Maturase K (502 aa).

This sequence belongs to the intron maturase 2 family. MatK subfamily.

It is found in the plastid. The protein resides in the chloroplast. Functionally, usually encoded in the trnK tRNA gene intron. Probably assists in splicing its own and other chloroplast group II introns. This is Maturase K from Brassica campestris (Field mustard).